The chain runs to 1086 residues: WD repeat-containing protein 64 (1086 aa).

WD repeat units lie at residues 129–168, 170–199, 321–360, 364–403, 411–448, 453–492, 498–537, 560–602, and 642–683; these read RRRDVIKCIVKVPQLDLLITASQKGLITVFNSQDTSWITG, DYLGQLKRIVATTERTIIVWDYKAQGSSQE, AMPRGANSFCYCGKANVIVTGGDDKVLRLWHPNISTKPVG, GHMFSITEIVSNEKEQHVISLSSAKVFRVWDIQTLSVLQV, PGDMQIYSMVYDANHGMLITGSGVIDMYPLTRMIQDTK, THEREVNVTLYNKYFHQVLTVCSESVIKVWELETGLQIYQ, GLSIELTCAAIDESGYLFATGAYNGTVKIWDFGSGQEMKM, QVKQ…PYLQ, and IVDV…VKEI. The segment at 724 to 749 is disordered; the sequence is ICSSTQCDSSKGPQSSKGSKQSIHDA. Over residues 732–744 the composition is skewed to low complexity; it reads SSKGPQSSKGSKQ. WD repeat units lie at residues 765–806, 809–850, and 863–902; these read ASRK…KDML, TKHS…DPPH, and AHSLEIIQVIYVEEKQLVLTASIDGSVRIWNSTSGHYCGY. The interval 1047–1069 is disordered; that stretch reads DKVKREEAPEMTEGSRRKSLKRN. Over residues 1049-1062 the composition is skewed to basic and acidic residues; the sequence is VKREEAPEMTEGSR.

The sequence is that of WD repeat-containing protein 64 (Wdr64) from Mus musculus (Mouse).